A 409-amino-acid chain; its full sequence is Bone morphogenetic protein 4 (409 aa).

Positions M1–G19 are cleaved as a signal peptide. A propeptide spanning residues G20–R293 is cleaved from the precursor. At S91 the chain carries Phosphoserine. N144 and N209 each carry an N-linked (GlcNAc...) asparagine glycan. Residues A284–N308 are disordered. 3 disulfides stabilise this stretch: C309–C374, C338–C406, and C342–C408. N-linked (GlcNAc...) asparagine glycans are attached at residues N351 and N366.

Belongs to the TGF-beta family. Homodimer; disulfide-linked. Interacts with GREM2. Part of a complex consisting of TWSG1 and CHRD. Interacts with the serine proteases, HTRA1 and HTRA3; the interaction with either inhibits BMP4-mediated signaling. The HTRA protease activity is required for this inhibition. Interacts with SOSTDC1. Interacts with FBN1 (via N-terminal domain) and FBN2. Interacts with type I receptor BMPR1A. Interacts with type II receptor BMPR2. Interacts with FSTL1; this interaction inhibits the activation of the BMP4/Smad1/5/8 signaling pathway. Interacts with TGFBR3.

It localises to the secreted. The protein localises to the extracellular space. The protein resides in the extracellular matrix. In terms of biological role, growth factor of the TGF-beta superfamily that plays essential roles in many developmental processes, including neurogenesis, vascular development, angiogenesis and osteogenesis. Acts in concert with PTHLH/PTHRP to stimulate ductal outgrowth during embryonic mammary development and to inhibit hair follicle induction. Initiates the canonical BMP signaling cascade by associating with type I receptor BMPR1A and type II receptor BMPR2. Once all three components are bound together in a complex at the cell surface, BMPR2 phosphorylates and activates BMPR1A. In turn, BMPR1A propagates signal by phosphorylating SMAD1/5/8 that travel to the nucleus and act as activators and repressors of transcription of target genes. Positively regulates the expression of odontogenic development regulator MSX1 via inducing the IPO7-mediated import of SMAD1 to the nucleus. Required for MSX1-mediated mesenchymal molar tooth bud development beyond the bud stage, via promoting Wnt signaling. Acts as a positive regulator of odontoblast differentiation during mesenchymal tooth germ formation, expression is repressed during the bell stage by MSX1-mediated inhibition of CTNNB1 signaling. Able to induce its own expression in dental mesenchymal cells and also in the neighboring dental epithelial cells via an MSX1-mediated pathway. Can also signal through non-canonical BMP pathways such as ERK/MAP kinase, PI3K/Akt, or SRC cascades. For example, induces SRC phosphorylation which, in turn, activates VEGFR2, leading to an angiogenic response. The polypeptide is Bone morphogenetic protein 4 (Suncus murinus (Asian house shrew)).